Consider the following 275-residue polypeptide: Formamidopyrimidine-DNA glycosylase (275 aa).

P2 functions as the Schiff-base intermediate with DNA in the catalytic mechanism. E3 acts as the Proton donor in catalysis. The Proton donor; for beta-elimination activity role is filled by K58. The DNA site is built by H93, R111, and R156. The FPG-type zinc finger occupies 241–275 (FVYDRAGQPCRVCGTPVRQIVQGQRSTYFCPTCQR). Residue R265 is the Proton donor; for delta-elimination activity of the active site.

It belongs to the FPG family. Monomer. Zn(2+) is required as a cofactor.

The catalysed reaction is Hydrolysis of DNA containing ring-opened 7-methylguanine residues, releasing 2,6-diamino-4-hydroxy-5-(N-methyl)formamidopyrimidine.. It catalyses the reaction 2'-deoxyribonucleotide-(2'-deoxyribose 5'-phosphate)-2'-deoxyribonucleotide-DNA = a 3'-end 2'-deoxyribonucleotide-(2,3-dehydro-2,3-deoxyribose 5'-phosphate)-DNA + a 5'-end 5'-phospho-2'-deoxyribonucleoside-DNA + H(+). In terms of biological role, involved in base excision repair of DNA damaged by oxidation or by mutagenic agents. Acts as a DNA glycosylase that recognizes and removes damaged bases. Has a preference for oxidized purines, such as 7,8-dihydro-8-oxoguanine (8-oxoG). Has AP (apurinic/apyrimidinic) lyase activity and introduces nicks in the DNA strand. Cleaves the DNA backbone by beta-delta elimination to generate a single-strand break at the site of the removed base with both 3'- and 5'-phosphates. The chain is Formamidopyrimidine-DNA glycosylase from Burkholderia cenocepacia (strain HI2424).